A 417-amino-acid polypeptide reads, in one-letter code: Serine hydroxymethyltransferase (417 aa).

(6S)-5,6,7,8-tetrahydrofolate is bound by residues leucine 121 and 125-127 (GHL). Lysine 229 bears the N6-(pyridoxal phosphate)lysine mark. 355–357 (SPF) serves as a coordination point for (6S)-5,6,7,8-tetrahydrofolate.

It belongs to the SHMT family. In terms of assembly, homodimer. The cofactor is pyridoxal 5'-phosphate.

The protein localises to the cytoplasm. It catalyses the reaction (6R)-5,10-methylene-5,6,7,8-tetrahydrofolate + glycine + H2O = (6S)-5,6,7,8-tetrahydrofolate + L-serine. Its pathway is one-carbon metabolism; tetrahydrofolate interconversion. It participates in amino-acid biosynthesis; glycine biosynthesis; glycine from L-serine: step 1/1. Functionally, catalyzes the reversible interconversion of serine and glycine with tetrahydrofolate (THF) serving as the one-carbon carrier. This reaction serves as the major source of one-carbon groups required for the biosynthesis of purines, thymidylate, methionine, and other important biomolecules. Also exhibits THF-independent aldolase activity toward beta-hydroxyamino acids, producing glycine and aldehydes, via a retro-aldol mechanism. This Xylella fastidiosa (strain M23) protein is Serine hydroxymethyltransferase.